The following is a 280-amino-acid chain: Ribonuclease Z (280 aa).

7 residues coordinate Zn(2+): His61, His63, Asp65, His66, His153, Asp176, and His240. Residue Asp65 is the Proton acceptor of the active site.

The protein belongs to the RNase Z family. Homodimer. The cofactor is Zn(2+).

The enzyme catalyses Endonucleolytic cleavage of RNA, removing extra 3' nucleotides from tRNA precursor, generating 3' termini of tRNAs. A 3'-hydroxy group is left at the tRNA terminus and a 5'-phosphoryl group is left at the trailer molecule.. Functionally, zinc phosphodiesterase, which displays some tRNA 3'-processing endonuclease activity. Probably involved in tRNA maturation, by removing a 3'-trailer from precursor tRNA. This chain is Ribonuclease Z, found in Mycobacterium avium (strain 104).